A 243-amino-acid chain; its full sequence is Cell division protein ZipA (243 aa).

Residues 1–4 (MSDM) lie on the Periplasmic side of the membrane. A helical transmembrane segment spans residues 5-25 (AMIRIGILIAGLLLVAAIFLF). Topologically, residues 26–243 (GRPKKSPQGR…APPLTKSPRW (218 aa)) are cytoplasmic. Residues 30 to 89 (KSPQGRRVDKDEGQPRERREPVISSEFGVEDDAAERAEGVEQSELNLEGQDASGGNEVGK) are disordered. The segment covering 35 to 50 (RRVDKDEGQPRERREP) has biased composition (basic and acidic residues).

This sequence belongs to the ZipA family. In terms of assembly, interacts with FtsZ via their C-terminal domains.

The protein resides in the cell inner membrane. Its function is as follows. Essential cell division protein that stabilizes the FtsZ protofilaments by cross-linking them and that serves as a cytoplasmic membrane anchor for the Z ring. Also required for the recruitment to the septal ring of downstream cell division proteins. In Xanthomonas euvesicatoria pv. vesicatoria (strain 85-10) (Xanthomonas campestris pv. vesicatoria), this protein is Cell division protein ZipA.